The sequence spans 273 residues: BTB and MATH domain-containing protein 15 (273 aa).

The MATH domain occupies 7-123 (EFVFHHTFKD…DNSFTIEACV (117 aa)). A BTB domain is found at 147–206 (SDVILVVGDEKFYVLKLFLASHSSYFNALFLGKFKEADQSEVTLQNIDPTDFQSLLEVLY).

Interacts with cul-3.

It participates in protein modification; protein ubiquitination. Functionally, probable substrate-specific adapter of an E3 ubiquitin-protein ligase complex which mediates the ubiquitination and subsequent proteasomal degradation of target proteins. The polypeptide is BTB and MATH domain-containing protein 15 (bath-15) (Caenorhabditis elegans).